The chain runs to 110 residues: ATP-dependent Clp protease adapter protein ClpS (110 aa).

Residues 1-10 (MSDDRRRGDE) show a composition bias toward basic and acidic residues. The interval 1 to 27 (MSDDRRRGDEDGGAGTGVITKTKPKTK) is disordered.

The protein belongs to the ClpS family. As to quaternary structure, binds to the N-terminal domain of the chaperone ClpA.

Its function is as follows. Involved in the modulation of the specificity of the ClpAP-mediated ATP-dependent protein degradation. This Parvibaculum lavamentivorans (strain DS-1 / DSM 13023 / NCIMB 13966) protein is ATP-dependent Clp protease adapter protein ClpS.